The following is a 368-amino-acid chain: Zinc finger protein 24 (368 aa).

K22 participates in a covalent cross-link: Glycyl lysine isopeptide (Lys-Gly) (interchain with G-Cter in SUMO2). K27 is covalently cross-linked (Glycyl lysine isopeptide (Lys-Gly) (interchain with G-Cter in SUMO1); alternate). K27 is covalently cross-linked (Glycyl lysine isopeptide (Lys-Gly) (interchain with G-Cter in SUMO2); alternate). The SCAN box domain maps to 52 to 134 (RQRFRQFGYQ…TVLEDLESEL (83 aa)). 2 positions are modified to phosphoserine: S132 and S142. Residues K147, K177, and K236 each participate in a glycyl lysine isopeptide (Lys-Gly) (interchain with G-Cter in SUMO2) cross-link. The C2H2-type 1 zinc finger occupies 251–273 (HICDECGKHFSQGSALILHQRIH). Positions 251-301 (HICDECGKHFSQGSALILHQRIHSGEKPYGCVECGKAFSRSSILVQHQRVH) are necessary and sufficient for nuclear localization. Position 274 is a phosphoserine (S274). Glycyl lysine isopeptide (Lys-Gly) (interchain with G-Cter in SUMO2) cross-links involve residues K277 and K286. C2H2-type zinc fingers lie at residues 279–301 (YGCV…QRVH), 307–329 (YKCL…QRIH), and 335–357 (YECV…QRRH). Position 292 is a phosphoserine (S292). Position 335 is a phosphotyrosine (Y335). Glycyl lysine isopeptide (Lys-Gly) (interchain with G-Cter in SUMO2) cross-links involve residues K361 and K367.

This sequence belongs to the krueppel C2H2-type zinc-finger protein family. Sumoylated.

It localises to the nucleus. Transcription factor required for myelination of differentiated oligodendrocytes. Required for the conversion of oligodendrocytes from the premyelinating to the myelinating state. In the developing central nervous system (CNS), involved in the maintenance in the progenitor stage by promoting the cell cycle. Specifically binds to the 5'-TCAT-3' DNA sequence. Has transcription repressor activity in vitro. In Rattus norvegicus (Rat), this protein is Zinc finger protein 24 (Znf24).